Reading from the N-terminus, the 395-residue chain is Carbohydrate sulfotransferase 5 (395 aa).

The Cytoplasmic portion of the chain corresponds to 1–7; the sequence is MRLPRFS. A helical; Signal-anchor for type II membrane protein transmembrane segment spans residues 8-26; that stretch reads STVMLSLLMVQTGILVFLV. Topologically, residues 27–395 are lumenal; that stretch reads SRQVPSSPAG…ASSTEKQPES (369 aa). Residue 49–55 participates in 3'-phosphoadenylyl sulfate binding; it reads WRSGSSF. N116 and N142 each carry an N-linked (GlcNAc...) asparagine glycan. 202-210 lines the 3'-phosphoadenylyl sulfate pocket; that stretch reads RDPRAVLRS. Residues N229 and N305 are each glycosylated (N-linked (GlcNAc...) asparagine).

Belongs to the sulfotransferase 1 family. Gal/GlcNAc/GalNAc subfamily. As to expression, expressed in cornea.

Its subcellular location is the golgi apparatus membrane. Functionally, sulfotransferase that utilizes 3'-phospho-5'-adenylyl sulfate (PAPS) as sulfonate donor to catalyze the transfer of sulfate to position 6 of non-reducing N-acetylglucosamine (GlcNAc) residues of keratan. Mediates sulfation of keratan in cornea. Keratan sulfate plays a central role in maintaining corneal transparency. Acts on the non-reducing terminal GlcNAc of short and long carbohydrate substrates that have poly-N-acetyllactosamine structures. May also have activity toward O-linked sugars of mucin-type acceptors. The polypeptide is Carbohydrate sulfotransferase 5 (Chst5) (Mus musculus (Mouse)).